A 170-amino-acid chain; its full sequence is Mitochondrial fission 1 protein A (170 aa).

The stretch at 90 to 123 (REKLYLLAVGYYRSGNYSRSRQLVDRCIEMQADW) is one TPR repeat. The helical transmembrane segment at 142–162 (VIGIGITATAFGAVGLIAGGI) threads the bilayer.

It belongs to the FIS1 family. In terms of assembly, interacts with ARC5.

It is found in the mitochondrion outer membrane. Its subcellular location is the peroxisome membrane. In terms of biological role, component of the peroxisomal and mitochondrial division machineries. Plays a role in promoting the fission of mitochondria and peroxisomes. This is Mitochondrial fission 1 protein A (FIS1A) from Arabidopsis thaliana (Mouse-ear cress).